We begin with the raw amino-acid sequence, 304 residues long: Pyridoxal 5'-phosphate synthase subunit PdxS (304 aa).

Residue Asp-34 coordinates D-ribose 5-phosphate. The active-site Schiff-base intermediate with D-ribose 5-phosphate is the Lys-91. Gly-163 is a binding site for D-ribose 5-phosphate. Arg-175 contacts D-glyceraldehyde 3-phosphate. Residues Gly-224 and 245–246 (GS) each bind D-ribose 5-phosphate.

It belongs to the PdxS/SNZ family. In the presence of PdxT, forms a dodecamer of heterodimers.

The enzyme catalyses aldehydo-D-ribose 5-phosphate + D-glyceraldehyde 3-phosphate + L-glutamine = pyridoxal 5'-phosphate + L-glutamate + phosphate + 3 H2O + H(+). The protein operates within cofactor biosynthesis; pyridoxal 5'-phosphate biosynthesis. Its function is as follows. Catalyzes the formation of pyridoxal 5'-phosphate from ribose 5-phosphate (RBP), glyceraldehyde 3-phosphate (G3P) and ammonia. The ammonia is provided by the PdxT subunit. Can also use ribulose 5-phosphate and dihydroxyacetone phosphate as substrates, resulting from enzyme-catalyzed isomerization of RBP and G3P, respectively. The chain is Pyridoxal 5'-phosphate synthase subunit PdxS from Cutibacterium acnes (strain DSM 16379 / KPA171202) (Propionibacterium acnes).